A 43-amino-acid polypeptide reads, in one-letter code: Photosystem I reaction center subunit IX (43 aa).

A helical membrane pass occupies residues Tyr7–Ile27.

The protein belongs to the PsaJ family.

Its subcellular location is the plastid. The protein resides in the chloroplast thylakoid membrane. In terms of biological role, may help in the organization of the PsaE and PsaF subunits. The chain is Photosystem I reaction center subunit IX from Aethionema cordifolium (Lebanon stonecress).